The primary structure comprises 557 residues: BZIP-type transcription factor MBZ1 (557 aa).

The span at 171-194 (AKAQAQQRQQQQQQQLIQQTQRQT) shows a compositional bias: low complexity. Disordered regions lie at residues 171-209 (AKAQ…TDPI) and 221-273 (MRAK…RQLR). A compositionally biased stretch (polar residues) spans 229–240 (EPESQSVLNNLP). Positions 254–271 (RLLASEEGKKLSSKERRQ) are enriched in basic and acidic residues. A bZIP domain is found at 264–327 (LSSKERRQLR…KRLSDLTRML (64 aa)). The interval 267–286 (KERRQLRNKVSARAFRSRRK) is basic motif. A leucine-zipper region spans residues 289–296 (ISQLEAEI). The tract at residues 344-364 (PTGLPQGSPVKIEQNPQQEQN) is disordered.

The protein localises to the nucleus. Functionally, BZIP-type transcription factor that functions as either an activator or a suppressor, and which contributes to the regulation of fungal growth, conidiation, cell wall integrity, and virulence. Plays a key role in virulence against insects by mediating cell wall integrity, cell surface hydrophobicity, and adherence to hydrophobic surfaces. Exhibits negative regulation of subtilisin proteases, but positive control of an adhesin gene. The sequence is that of BZIP-type transcription factor MBZ1 from Metarhizium robertsii (strain ARSEF 23 / ATCC MYA-3075) (Metarhizium anisopliae (strain ARSEF 23)).